Here is a 641-residue protein sequence, read N- to C-terminus: Chaperone protein HtpG (641 aa).

The segment at 1-351 (MTQSVHAETH…SNDLPLNVSR (351 aa)) is a; substrate-binding. The tract at residues 352 to 568 (EILQDNKVTV…AHGMSTQMIK (217 aa)) is b. Residues 569–641 (LMRAAGQPVP…SRINRLLLQA (73 aa)) form a c region.

This sequence belongs to the heat shock protein 90 family. Homodimer.

It localises to the cytoplasm. Functionally, molecular chaperone. Has ATPase activity. In Aeromonas hydrophila subsp. hydrophila (strain ATCC 7966 / DSM 30187 / BCRC 13018 / CCUG 14551 / JCM 1027 / KCTC 2358 / NCIMB 9240 / NCTC 8049), this protein is Chaperone protein HtpG.